The chain runs to 713 residues: Ribosomal RNA large subunit methyltransferase K/L (713 aa).

In terms of domain architecture, THUMP spans 43–154; that stretch reads LLYRALLWSR…RDQVMLSLDL (112 aa).

This sequence belongs to the methyltransferase superfamily. RlmKL family.

Its subcellular location is the cytoplasm. The enzyme catalyses guanosine(2445) in 23S rRNA + S-adenosyl-L-methionine = N(2)-methylguanosine(2445) in 23S rRNA + S-adenosyl-L-homocysteine + H(+). It carries out the reaction guanosine(2069) in 23S rRNA + S-adenosyl-L-methionine = N(2)-methylguanosine(2069) in 23S rRNA + S-adenosyl-L-homocysteine + H(+). Specifically methylates the guanine in position 2445 (m2G2445) and the guanine in position 2069 (m7G2069) of 23S rRNA. The sequence is that of Ribosomal RNA large subunit methyltransferase K/L from Sodalis glossinidius (strain morsitans).